Reading from the N-terminus, the 411-residue chain is DNA polymerase IV (411 aa).

Residues Val18–Gly211 enclose the UmuC domain. Mg(2+)-binding residues include Asp22 and Asp130. The active site involves Glu131. Disordered stretches follow at residues Phe248–Glu280 and Gly376–Thr411. Over residues Arg253–Ser274 the composition is skewed to basic and acidic residues. Gly residues predominate over residues Asp384–Gly402.

The protein belongs to the DNA polymerase type-Y family. As to quaternary structure, monomer. The cofactor is Mg(2+).

It localises to the cytoplasm. It catalyses the reaction DNA(n) + a 2'-deoxyribonucleoside 5'-triphosphate = DNA(n+1) + diphosphate. Its function is as follows. Poorly processive, error-prone DNA polymerase involved in untargeted mutagenesis. Copies undamaged DNA at stalled replication forks, which arise in vivo from mismatched or misaligned primer ends. These misaligned primers can be extended by PolIV. Exhibits no 3'-5' exonuclease (proofreading) activity. May be involved in translesional synthesis. The sequence is that of DNA polymerase IV from Halobacterium salinarum (strain ATCC 29341 / DSM 671 / R1).